Here is a 166-residue protein sequence, read N- to C-terminus: P2Y purinoceptor 2 (166 aa).

At valine 1–arginine 24 the chain is on the cytoplasmic side. Residues valine 25–threonine 45 form a helical membrane-spanning segment. Residues threonine 46 to serine 72 lie on the Extracellular side of the membrane. The chain crosses the membrane as a helical span at residues valine 73 to methionine 93. Residues alanine 94 to serine 115 lie on the Cytoplasmic side of the membrane. A helical membrane pass occupies residues valine 116 to threonine 136. Over arginine 137 to alanine 159 the chain is Extracellular. A helical membrane pass occupies residues tyrosine 160–leucine 166.

The protein belongs to the G-protein coupled receptor 1 family.

It localises to the cell membrane. Receptor for ATP and UTP coupled to G-proteins that activate a phosphatidylinositol-calcium second messenger system. This chain is P2Y purinoceptor 2 (P2RY2), found in Cricetulus griseus (Chinese hamster).